The following is a 335-amino-acid chain: Fructose-1,6-bisphosphatase class 1 1 (335 aa).

Mg(2+) contacts are provided by Glu92, Asp114, Leu116, and Asp117. Substrate contacts are provided by residues 117 to 120 (DGSS), Asn209, and Lys275. Glu281 is a binding site for Mg(2+).

It belongs to the FBPase class 1 family. Homotetramer. Mg(2+) serves as cofactor.

It is found in the cytoplasm. The catalysed reaction is beta-D-fructose 1,6-bisphosphate + H2O = beta-D-fructose 6-phosphate + phosphate. It functions in the pathway carbohydrate biosynthesis; gluconeogenesis. This chain is Fructose-1,6-bisphosphatase class 1 1, found in Polaromonas naphthalenivorans (strain CJ2).